The following is a 465-amino-acid chain: Cysteine--tRNA ligase (465 aa).

Cys29 serves as a coordination point for Zn(2+). The short motif at 31 to 41 (PTVYNYIHIGN) is the 'HIGH' region element. 3 residues coordinate Zn(2+): Cys209, His234, and Glu238. The 'KMSKS' region motif lies at 266 to 270 (KMSKS). Lys269 lines the ATP pocket. The residue at position 270 (Ser270) is a Phosphoserine.

The protein belongs to the class-I aminoacyl-tRNA synthetase family. Monomer. Requires Zn(2+) as cofactor.

The protein localises to the cytoplasm. The enzyme catalyses tRNA(Cys) + L-cysteine + ATP = L-cysteinyl-tRNA(Cys) + AMP + diphosphate. This chain is Cysteine--tRNA ligase, found in Bacillus cytotoxicus (strain DSM 22905 / CIP 110041 / 391-98 / NVH 391-98).